The sequence spans 67 residues: Large ribosomal subunit protein bL35 (67 aa).

The segment covering methionine 1 to valine 16 has biased composition (basic residues). A disordered region spans residues methionine 1–arginine 24.

This sequence belongs to the bacterial ribosomal protein bL35 family.

The chain is Large ribosomal subunit protein bL35 from Verminephrobacter eiseniae (strain EF01-2).